A 283-amino-acid chain; its full sequence is Undecaprenyl-diphosphatase (283 aa).

The next 7 membrane-spanning stretches (helical) occupy residues 1–21 (MDIIQAIVLGIIQGLTEFLPI), 40–60 (GAAFTAIIQIGTLAAVLIYFY), 85–105 (SRMGWMISAGTIPIVVLGLLF), 117–137 (YIISGSLILLALVLMYAEYLV), 196–216 (FSFLLSLPAVFAAGVYQLLKV), 232–252 (VATVVSGVIGYASIAFLLDYL), and 258–278 (YLFIIYRILLGVFLLAMLSMG).

Belongs to the UppP family.

Its subcellular location is the cell inner membrane. The catalysed reaction is di-trans,octa-cis-undecaprenyl diphosphate + H2O = di-trans,octa-cis-undecaprenyl phosphate + phosphate + H(+). In terms of biological role, catalyzes the dephosphorylation of undecaprenyl diphosphate (UPP). Confers resistance to bacitracin. This chain is Undecaprenyl-diphosphatase, found in Chloroherpeton thalassium (strain ATCC 35110 / GB-78).